A 488-amino-acid chain; its full sequence is IQ domain-containing protein IQM1 (488 aa).

Positions 20-46 are disordered; that stretch reads RTNSFKRDDTNRHQNSPKSTMERSLSF. Residues 32 to 46 are compositionally biased toward polar residues; sequence HQNSPKSTMERSLSF. Residues 106–135 enclose the IQ domain; it reads LDAAATTLQKVYKSYRTRRNLADCAVVVEE. Disordered regions lie at residues 377-403 and 448-472; these read SFKSTADEEEERKEVSEEVEIPSEKEE and SPRVSPANSYGPIPSPRPSPKVRVS. The segment covering 388–403 has biased composition (basic and acidic residues); that stretch reads RKEVSEEVEIPSEKEE.

As to quaternary structure, interacts (via IQ domain) with CAM5. Highly expressed in leaf mesophyll cells. Expressed in roots, rosette and cauline leaves, stems, flowers and siliques.

The protein resides in the cytoplasm. It is found in the nucleus. Functionally, involved in the modulation of stomatal movement. Promotes stomatal opening. May play a role in the regulation of chitin signaling. May be involved in biotic and abiotic stress responses. The chain is IQ domain-containing protein IQM1 from Arabidopsis thaliana (Mouse-ear cress).